A 154-amino-acid chain; its full sequence is Endoribonuclease YbeY (154 aa).

The Zn(2+) site is built by histidine 117, histidine 121, and histidine 127.

Belongs to the endoribonuclease YbeY family. Requires Zn(2+) as cofactor.

It is found in the cytoplasm. Functionally, single strand-specific metallo-endoribonuclease involved in late-stage 70S ribosome quality control and in maturation of the 3' terminus of the 16S rRNA. This chain is Endoribonuclease YbeY, found in Mycoplasma pneumoniae (strain ATCC 29342 / M129 / Subtype 1) (Mycoplasmoides pneumoniae).